A 470-amino-acid polypeptide reads, in one-letter code: Probable E3 ubiquitin-protein ligase TRIML1 (470 aa).

The RING-type zinc finger occupies 22–63 (CFICLDYFSSPVTTECGHSFCLMCLLKSWEEHNTPLSCPECW). 2 coiled-coil regions span residues 135 to 170 (SEAE…KERV) and 196 to 235 (KEEE…GKMI). Residues 273 to 470 (TELSLCHITG…NTDPLIICHI (198 aa)) form the B30.2/SPRY domain.

Interacts with USP5. As to expression, testis.

It catalyses the reaction S-ubiquitinyl-[E2 ubiquitin-conjugating enzyme]-L-cysteine + [acceptor protein]-L-lysine = [E2 ubiquitin-conjugating enzyme]-L-cysteine + N(6)-ubiquitinyl-[acceptor protein]-L-lysine.. Its pathway is protein modification; protein ubiquitination. In terms of biological role, probable E3 ubiquitin-protein ligase which plays an important role in blastocyst development. Involved in progression of blastocyst stage and subsequent embryo development. This chain is Probable E3 ubiquitin-protein ligase TRIML1 (Triml1), found in Mus musculus (Mouse).